Here is a 409-residue protein sequence, read N- to C-terminus: Elongation factor Tu, cyanelle (409 aa).

Positions 10–214 (KPHVNIGTIG…AVDEYIPTPE (205 aa)) constitute a tr-type G domain. The interval 19–26 (GHVDHGKT) is G1. GTP is bound at residue 19 to 26 (GHVDHGKT). Residue Thr26 coordinates Mg(2+). Positions 60 to 64 (GITIN) are G2. A G3 region spans residues 81-84 (DCPG). Residues 81-85 (DCPGH) and 136-139 (NKED) each bind GTP. The segment at 136–139 (NKED) is G4. A G5 region spans residues 174–176 (SAL).

Belongs to the TRAFAC class translation factor GTPase superfamily. Classic translation factor GTPase family. EF-Tu/EF-1A subfamily.

Its subcellular location is the plastid. The protein resides in the cyanelle. The catalysed reaction is GTP + H2O = GDP + phosphate + H(+). Its function is as follows. GTP hydrolase that promotes the GTP-dependent binding of aminoacyl-tRNA to the A-site of ribosomes during protein biosynthesis. This is Elongation factor Tu, cyanelle (tufA) from Cyanophora paradoxa.